The chain runs to 311 residues: MSQQLPDVQATEPDVSVGLSEVGVTGVEKLVEIAREDDRPIVLMAEFEVYVDLPRGRKGIDMSRNMRVIDETLEDAVREPIYRVEEMCGEVAERLLEKHDYTTTATVEMNAELMLREETPASDLPTQGTIDIIASATAQEDAPTREEIGARVVGMTVCPCSQQMMSETARRKLAELGVGEDAVREFLRDVPQAGHSQRGHATLTVEAGGDPDVNLMDLVSVARDSMSARIYNTAKRPDEDHMTYESHANAKFVEDCVRSMARGVVEEFDHLPEDAVVTMKQSNDESIHQHNAHAERVAEFGQLREEVGSGE.

Belongs to the GTP cyclohydrolase IV family. In terms of assembly, homodimer. The cofactor is Fe(2+).

It catalyses the reaction GTP + H2O = 7,8-dihydroneopterin 2',3'-cyclic phosphate + formate + diphosphate + H(+). Its pathway is cofactor biosynthesis; 5,6,7,8-tetrahydromethanopterin biosynthesis. Functionally, converts GTP to 7,8-dihydro-D-neopterin 2',3'-cyclic phosphate, the first intermediate in the biosynthesis of coenzyme methanopterin. The sequence is that of GTP cyclohydrolase MptA from Halobacterium salinarum (strain ATCC 29341 / DSM 671 / R1).